A 394-amino-acid chain; its full sequence is MAKQKFDRSKAHVNIGTIGHIDHGKTTLTAAICTYLAKKGGAKAMKYDEIDKAPEEKARGITINTAHVEYETENRHYAHVDCPGHADYVKNMITGAAQMDGAILVVAASDGPMPQTREHILLARQVGVPKMVVFLNKCDMVSDAEMQDLVEMEVRELLSSYGFDGDNTPVIRGSALKALEGDATWEAKIDELMASVDSYIPTPTRDTDKPFLLAVEDVMTITGRGTVVTGRVERGTLKLNDEVEIVGIHDTRKAVVTGMEMLRKTLDEVKAGDNAGILLRGIDRKDVERGQVLAKPGSIKPHKQFEAEIYALKKEEGGRHTPVLNGYRPQFYFRTTDVTGQITLDKGVEMINPGDNTKITVELISPIAVEEGSKFSIREGGRTVGAGTVTKVIK.

In terms of domain architecture, tr-type G spans 10-204 (KAHVNIGTIG…SVDSYIPTPT (195 aa)). Residues 19-26 (GHIDHGKT) form a G1 region. 19 to 26 (GHIDHGKT) lines the GTP pocket. Position 26 (Thr26) interacts with Mg(2+). The segment at 60 to 64 (GITIN) is G2. Residues 81-84 (DCPG) are G3. GTP contacts are provided by residues 81–85 (DCPGH) and 136–139 (NKCD). The G4 stretch occupies residues 136 to 139 (NKCD). A G5 region spans residues 174-176 (SAL).

It belongs to the TRAFAC class translation factor GTPase superfamily. Classic translation factor GTPase family. EF-Tu/EF-1A subfamily. As to quaternary structure, monomer.

The protein localises to the cytoplasm. The catalysed reaction is GTP + H2O = GDP + phosphate + H(+). Functionally, GTP hydrolase that promotes the GTP-dependent binding of aminoacyl-tRNA to the A-site of ribosomes during protein biosynthesis. This Malacoplasma penetrans (strain HF-2) (Mycoplasma penetrans) protein is Elongation factor Tu.